The sequence spans 309 residues: tRNA dimethylallyltransferase (309 aa).

Position 13-20 (13-20) interacts with ATP; the sequence is GPTAVGKS. 15 to 20 contributes to the substrate binding site; sequence TAVGKS.

Belongs to the IPP transferase family. Monomer. It depends on Mg(2+) as a cofactor.

It carries out the reaction adenosine(37) in tRNA + dimethylallyl diphosphate = N(6)-dimethylallyladenosine(37) in tRNA + diphosphate. In terms of biological role, catalyzes the transfer of a dimethylallyl group onto the adenine at position 37 in tRNAs that read codons beginning with uridine, leading to the formation of N6-(dimethylallyl)adenosine (i(6)A). This is tRNA dimethylallyltransferase from Lacticaseibacillus casei (strain BL23) (Lactobacillus casei).